A 70-amino-acid polypeptide reads, in one-letter code: Sec-independent protein translocase protein TatA (70 aa).

Residues 1-21 (MFGLGGQELLLILLIILLLFG) form a helical membrane-spanning segment. The tract at residues 47 to 70 (EDEFNKAMSDPPEKKEKESPSDKG) is disordered. Positions 57-70 (PPEKKEKESPSDKG) are enriched in basic and acidic residues.

The protein belongs to the TatA/E family. In terms of assembly, forms a complex with TatC.

The protein resides in the cell inner membrane. Functionally, part of the twin-arginine translocation (Tat) system that transports large folded proteins containing a characteristic twin-arginine motif in their signal peptide across membranes. TatA could form the protein-conducting channel of the Tat system. This is Sec-independent protein translocase protein TatA from Prosthecochloris aestuarii (strain DSM 271 / SK 413).